The sequence spans 236 residues: Ribosome maturation protein SDO1 homolog (236 aa).

It belongs to the SDO1/SBDS family. As to quaternary structure, crystallized in association with 70S ribosomes.

This chain is Ribosome maturation protein SDO1 homolog, found in Thermococcus kodakarensis (strain ATCC BAA-918 / JCM 12380 / KOD1) (Pyrococcus kodakaraensis (strain KOD1)).